A 56-amino-acid chain; its full sequence is Large ribosomal subunit protein bL33 (56 aa).

This sequence belongs to the bacterial ribosomal protein bL33 family.

This is Large ribosomal subunit protein bL33 from Actinobacillus succinogenes (strain ATCC 55618 / DSM 22257 / CCUG 43843 / 130Z).